A 312-amino-acid polypeptide reads, in one-letter code: Serine/threonine-protein phosphatase PP1 isozyme 2 (312 aa).

Alanine 2 is modified (N-acetylalanine). Residues aspartate 70, histidine 72, aspartate 98, and asparagine 130 each contribute to the Mn(2+) site. Histidine 131 functions as the Proton donor in the catalytic mechanism. Residues histidine 179 and histidine 254 each contribute to the Mn(2+) site.

It belongs to the PPP phosphatase family. PP-1 subfamily. Interacts with SRK2D/SNRK2.2 and SRK2E/SNRK2.6. It depends on Mn(2+) as a cofactor.

The protein resides in the nucleus. Its subcellular location is the cytoplasm. The catalysed reaction is O-phospho-L-seryl-[protein] + H2O = L-seryl-[protein] + phosphate. It carries out the reaction O-phospho-L-threonyl-[protein] + H2O = L-threonyl-[protein] + phosphate. Its activity is regulated as follows. Phosphatase activity is strongly reduced by the protein phosphatase inhibitor 2 (I-2). Serine/threonine-protein phosphatase that possesses phosphatase activity toward para-nitrophenyl phosphate (pNPP) in vitro. This is Serine/threonine-protein phosphatase PP1 isozyme 2 from Arabidopsis thaliana (Mouse-ear cress).